The primary structure comprises 622 residues: Leucine-rich repeat and immunoglobulin-like domain-containing nogo receptor-interacting protein 1-B (622 aa).

The N-terminal stretch at 1–43 (MTFLQVTIKMVAREASGHSYLVACWQPILILMLGTVLSGSATG) is a signal peptide. 2 disulfide bridges follow: cysteine 44/cysteine 50 and cysteine 48/cysteine 59. The 30-residue stretch at 44-73 (CPSRCECSAQERSVVCHRRKLITLPEGIPI) folds into the LRRNT domain. At 44–563 (CPSRCECSAQ…FDMKTLIIAT (520 aa)) the chain is on the extracellular side. LRR repeat units follow at residues 74 to 95 (DTRL…EFLN), 98 to 119 (QLED…AFSN), 122 to 143 (GLRT…VFTG), 146 to 167 (NLTR…MFQE), 170 to 191 (NLKE…AFHG), 194 to 215 (SLEQ…AFSH), 218 to 239 (NLLT…SFRR), 266 to 287 (NITT…AIQH), 290 to 311 (YLRF…KMHN), 314 to 335 (RLQA…SFKG), and 338 to 359 (YLRV…AFHS). N-linked (GlcNAc...) asparagine glycosylation occurs at asparagine 146. Residue asparagine 204 is glycosylated (N-linked (GlcNAc...) asparagine). 3 N-linked (GlcNAc...) asparagine glycosylation sites follow: asparagine 266, asparagine 276, and asparagine 295. N-linked (GlcNAc...) asparagine glycosylation occurs at asparagine 343. The LRRCT domain occupies 371-425 (NPLACDCRLLWVFRRRWRLNFNRQQPSCETPEFLQGKEFKDFPDVLPPNYFTCQK). Intrachain disulfides connect cysteine 375–cysteine 398, cysteine 377–cysteine 423, and cysteine 448–cysteine 499. In terms of domain architecture, Ig-like C2-type spans 413 to 515 (PDVLPPNYFT…GNDTRLAHLH (103 aa)). 4 N-linked (GlcNAc...) asparagine glycosylation sites follow: asparagine 494, asparagine 507, asparagine 528, and asparagine 544. The helical transmembrane segment at 564–584 (TMGFISFLGVVLFCLVLLFLW) threads the bilayer. Topologically, residues 585 to 622 (SRGKGNAKPNIEIEYVPRKVDGENSPNEGSHKISMKMI) are cytoplasmic.

It localises to the cell membrane. May play a role in regulating axonal regeneration and plasticity in the adult central nervous system. This is Leucine-rich repeat and immunoglobulin-like domain-containing nogo receptor-interacting protein 1-B (lingo1b) from Danio rerio (Zebrafish).